The sequence spans 79 residues: Ornithine decarboxylase (79 aa).

Pyridoxal 5'-phosphate is bound by residues S8, G45, and 75–78 (EPGR).

This sequence belongs to the Orn/Lys/Arg decarboxylase class-II family. In terms of assembly, homodimer. Only the dimer is catalytically active, as the active sites are constructed of residues from both monomers. Requires pyridoxal 5'-phosphate as cofactor.

The protein resides in the cytoplasm. It carries out the reaction L-ornithine + H(+) = putrescine + CO2. The protein operates within amine and polyamine biosynthesis; putrescine biosynthesis via L-ornithine pathway; putrescine from L-ornithine: step 1/1. Inhibited by antizyme (AZ) OAZ1 in response to polyamine levels. AZ inhibits the assembly of the functional homodimer by binding to ODC monomers and targeting them for ubiquitin-independent proteolytic destruction by the 26S proteasome. Its function is as follows. Catalyzes the first and rate-limiting step of polyamine biosynthesis that converts ornithine into putrescine, which is the precursor for the polyamines, spermidine and spermine. Polyamines are essential for cell proliferation and are implicated in cellular processes, ranging from DNA replication to apoptosis. This Paracoccidioides brasiliensis protein is Ornithine decarboxylase (ODC).